Here is a 48-residue protein sequence, read N- to C-terminus: uncharacterized protein (48 aa).

This is an uncharacterized protein from Acidianus filamentous virus 2 (isolate Italy/Pozzuoli) (AFV-2).